We begin with the raw amino-acid sequence, 216 residues long: Nudix hydrolase 26, chloroplastic (216 aa).

The N-terminal 53 residues, 1 to 53 (MALYRPLLLHHPTSPSVTTFLRNYPSKPIKFSSLPFLHRCRKSRVSSSSARCC), are a transit peptide targeting the chloroplast. The Nudix hydrolase domain occupies 62–209 (GYRRNVGVCL…KKPVYKEVMS (148 aa)). Positions 95-116 (GGIDEGEDPRVAVMRELKEETG) match the Nudix box motif. Mn(2+) is bound by residues Glu110 and Glu114.

This sequence belongs to the Nudix hydrolase family. Mg(2+) is required as a cofactor. Mn(2+) serves as cofactor. In terms of tissue distribution, expressed in roots, leaves, stems and inflorescences.

The protein resides in the plastid. It localises to the chloroplast. In terms of biological role, mediates the hydrolysis of some nucleoside diphosphate derivatives. Can use diadenosine 5',5'''-P(1)P(5) pentaphosphate (Ap(5)A), diadenosine 5',5'''-P(1)P(4) tetraphosphate (Ap(4)A) and diadenosine 5',5'''-P(1)P(3) triphosphate (Ap(3)A) as substrates. The polypeptide is Nudix hydrolase 26, chloroplastic (NUDT26) (Arabidopsis thaliana (Mouse-ear cress)).